The chain runs to 152 residues: D-aminoacyl-tRNA deacylase (152 aa).

The Gly-cisPro motif, important for rejection of L-amino acids motif lies at 142–143; it reads GP.

It belongs to the DTD family. As to quaternary structure, homodimer.

It is found in the cytoplasm. The catalysed reaction is glycyl-tRNA(Ala) + H2O = tRNA(Ala) + glycine + H(+). The enzyme catalyses a D-aminoacyl-tRNA + H2O = a tRNA + a D-alpha-amino acid + H(+). In terms of biological role, an aminoacyl-tRNA editing enzyme that deacylates mischarged D-aminoacyl-tRNAs. Also deacylates mischarged glycyl-tRNA(Ala), protecting cells against glycine mischarging by AlaRS. Acts via tRNA-based rather than protein-based catalysis; rejects L-amino acids rather than detecting D-amino acids in the active site. By recycling D-aminoacyl-tRNA to D-amino acids and free tRNA molecules, this enzyme counteracts the toxicity associated with the formation of D-aminoacyl-tRNA entities in vivo and helps enforce protein L-homochirality. The sequence is that of D-aminoacyl-tRNA deacylase from Burkholderia vietnamiensis (strain G4 / LMG 22486) (Burkholderia cepacia (strain R1808)).